The following is a 510-amino-acid chain: Beta-glucosidase 12 (510 aa).

The first 24 residues, 1 to 24 (MAAAGAMPGGLLLTFLLLAVVASG), serve as a signal peptide directing secretion. Residue Gln53 participates in a beta-D-glucoside binding. The N-linked (GlcNAc...) asparagine glycan is linked to Asn122. A beta-D-glucoside-binding positions include His157 and 202–203 (NE). Glu203 acts as the Proton donor in catalysis. 2 disulfides stabilise this stretch: Cys208/Cys243 and Cys222/Cys230. Asn229 carries an N-linked (GlcNAc...) asparagine glycan. Tyr346 serves as a coordination point for a beta-D-glucoside. Asn361 and Asn371 each carry an N-linked (GlcNAc...) asparagine glycan. Residue Glu417 participates in a beta-D-glucoside binding. The active-site Nucleophile is the Glu417. N-linked (GlcNAc...) asparagine glycosylation occurs at Asn425. A beta-D-glucoside-binding positions include Trp466, 473 to 474 (EW), and Phe482.

This sequence belongs to the glycosyl hydrolase 1 family.

It localises to the secreted. The enzyme catalyses Hydrolysis of terminal, non-reducing beta-D-glucosyl residues with release of beta-D-glucose.. Functionally, hydrolyzes p-nitrophenyl beta-D-glucoside, p-nitrophenyl beta-D-galactoside, p-nitrophenyl beta-D-xyloside, p-nitrophenyl beta-D-fucoside, p-nitrophenyl beta-L-arabinoside, cello-oligosaccharides and laminaribiose. The polypeptide is Beta-glucosidase 12 (Oryza sativa subsp. japonica (Rice)).